Here is a 330-residue protein sequence, read N- to C-terminus: Methionyl-tRNA formyltransferase (330 aa).

117–120 (SLLP) contacts (6S)-5,6,7,8-tetrahydrofolate.

The protein belongs to the Fmt family.

The enzyme catalyses L-methionyl-tRNA(fMet) + (6R)-10-formyltetrahydrofolate = N-formyl-L-methionyl-tRNA(fMet) + (6S)-5,6,7,8-tetrahydrofolate + H(+). In terms of biological role, attaches a formyl group to the free amino group of methionyl-tRNA(fMet). The formyl group appears to play a dual role in the initiator identity of N-formylmethionyl-tRNA by promoting its recognition by IF2 and preventing the misappropriation of this tRNA by the elongation apparatus. In Verminephrobacter eiseniae (strain EF01-2), this protein is Methionyl-tRNA formyltransferase.